The sequence spans 118 residues: Small ribosomal subunit protein uS13 (118 aa).

Positions 94–118 (SLPLRGQRTKTNARTRKGPRKPIRK) are disordered.

This sequence belongs to the universal ribosomal protein uS13 family. In terms of assembly, part of the 30S ribosomal subunit. Forms a loose heterodimer with protein S19. Forms two bridges to the 50S subunit in the 70S ribosome.

Its function is as follows. Located at the top of the head of the 30S subunit, it contacts several helices of the 16S rRNA. In the 70S ribosome it contacts the 23S rRNA (bridge B1a) and protein L5 of the 50S subunit (bridge B1b), connecting the 2 subunits; these bridges are implicated in subunit movement. Contacts the tRNAs in the A and P-sites. The sequence is that of Small ribosomal subunit protein uS13 from Shewanella sediminis (strain HAW-EB3).